Reading from the N-terminus, the 602-residue chain is Elongation factor 4 (602 aa).

The region spanning lysine 7–glutamine 189 is the tr-type G domain. GTP is bound by residues aspartate 19–threonine 24 and asparagine 136–aspartate 139.

Belongs to the TRAFAC class translation factor GTPase superfamily. Classic translation factor GTPase family. LepA subfamily.

Its subcellular location is the cell membrane. It carries out the reaction GTP + H2O = GDP + phosphate + H(+). Its function is as follows. Required for accurate and efficient protein synthesis under certain stress conditions. May act as a fidelity factor of the translation reaction, by catalyzing a one-codon backward translocation of tRNAs on improperly translocated ribosomes. Back-translocation proceeds from a post-translocation (POST) complex to a pre-translocation (PRE) complex, thus giving elongation factor G a second chance to translocate the tRNAs correctly. Binds to ribosomes in a GTP-dependent manner. This Clostridium kluyveri (strain ATCC 8527 / DSM 555 / NBRC 12016 / NCIMB 10680 / K1) protein is Elongation factor 4.